A 484-amino-acid chain; its full sequence is Sperm motility kinase Tcr mutant form (484 aa).

The Protein kinase domain maps to Tyr8–Val256. ATP is bound by residues Ile14–Val22 and Lys37. The active-site Proton acceptor is Asp127. Disordered regions lie at residues Glu355–Gln400 and Ser426–Pro446. Polar residues predominate over residues Pro391–Gln400.

Belongs to the protein kinase superfamily. Tyr protein kinase family. Smok subfamily. In terms of tissue distribution, testis-specific. Expressed in the testis from 22 days postpartum (22 dpp). Expressed late in spermiogenesis, only in Tcr-containing t-haplotypes.

It carries out the reaction L-seryl-[protein] + ATP = O-phospho-L-seryl-[protein] + ADP + H(+). The enzyme catalyses L-threonyl-[protein] + ATP = O-phospho-L-threonyl-[protein] + ADP + H(+). Its function is as follows. While the main function of Smoks is to control sperm motility, the role of Smok-Tcr, with reduced kinase activity, is to counterbalance a signaling impairment caused by the distorter/sterility loci, giving t-sperm an advantage in reaching the oocytes. Transmission ratio distortion also called segregation distortion is the name given to the phenomenon above-mentioned. Being associated with the T-complex, it allows males heterozygous for a complete t-haplotype to preferentially transmit the t-haplotype chromosome. The protein is Sperm motility kinase Tcr mutant form (Smoktcr) of Mus musculus (Mouse).